We begin with the raw amino-acid sequence, 770 residues long: Arf-GAP with coiled-coil, ANK repeat and PH domain-containing protein 2 (770 aa).

The BAR domain occupies 1–226; that stretch reads MKMTVDFEEC…MKDLGAQLDR (226 aa). The PH domain occupies 266 to 361; sequence GIVMEGYLFK…WIKAVQTSIA (96 aa). Residues 371–391 form a disordered region; it reads SEKLDKKSSPSTGSLDSGNES. The segment covering 379–388 has biased composition (polar residues); it reads SPSTGSLDSG. 2 positions are modified to phosphoserine: Ser-384 and Ser-387. In terms of domain architecture, Arf-GAP spans 399–520; the sequence is ESALQRVQCI…KFVDKYSALL (122 aa). The C4-type zinc-finger motif lies at 414–437; that stretch reads CCDCGLADPRWASINLGITLCIEC. Ser-521 is modified (phosphoserine). The interval 542 to 572 is disordered; that stretch reads ARASVHTPVKSNDSGIQQCSEDGRESLPSTV. A compositionally biased stretch (polar residues) spans 550–561; sequence VKSNDSGIQQCS. 2 positions are modified to phosphoserine: Ser-573 and Ser-576. 3 ANK repeats span residues 632 to 661, 665 to 694, and 698 to 727; these read NQAT…NVNQ, QGRG…NQHA, and EGKD…NEEM. Tyr-734 bears the Phosphotyrosine mark. Ser-767 carries the phosphoserine modification.

As to quaternary structure, interacts with RAB35 (GTP-bound form); the interaction is direct and probably recruits ACAP2 to membranes. Interacts with MICALL1; the interaction is indirect through RAB35.

Its subcellular location is the endosome membrane. It is found in the cell membrane. With respect to regulation, GAP activity stimulated by phosphatidylinositol 4,5-bisphosphate (PIP2) and phosphatidic acid. GTPase-activating protein (GAP) for ADP ribosylation factor 6 (ARF6). Doesn't show GAP activity for RAB35. The chain is Arf-GAP with coiled-coil, ANK repeat and PH domain-containing protein 2 (Acap2) from Mus musculus (Mouse).